Reading from the N-terminus, the 26-residue chain is Morintide mO4 (26 aa).

In terms of domain architecture, Chitin-binding type-1 spans 1 to 26; sequence NRLCCSQYGFCGTTSEYCSRVSGCQS. An intrachain disulfide couples C4 to C18.

In terms of tissue distribution, seeds (at protein level).

Functionally, chitin-binding protein which functions in defense against chitin-containing fungal pathogens. The protein is Morintide mO4 of Moringa oleifera (Horseradish tree).